A 90-amino-acid polypeptide reads, in one-letter code: Small ribosomal subunit protein bS16 (90 aa).

This sequence belongs to the bacterial ribosomal protein bS16 family.

The chain is Small ribosomal subunit protein bS16 from Oceanobacillus iheyensis (strain DSM 14371 / CIP 107618 / JCM 11309 / KCTC 3954 / HTE831).